We begin with the raw amino-acid sequence, 401 residues long: L-rhamnonate dehydratase (401 aa).

Positions 29 and 55 each coordinate substrate. The Mg(2+) site is built by Asp222, Glu248, and Glu276. His325 acts as the Proton acceptor in catalysis. Position 345 (Glu345) interacts with substrate.

This sequence belongs to the mandelate racemase/muconate lactonizing enzyme family. RhamD subfamily. Homooctamer; tetramer of dimers. It depends on Mg(2+) as a cofactor.

It catalyses the reaction L-rhamnonate = 2-dehydro-3-deoxy-L-rhamnonate + H2O. Catalyzes the dehydration of L-rhamnonate to 2-keto-3-deoxy-L-rhamnonate (KDR). The polypeptide is L-rhamnonate dehydratase (Klebsiella pneumoniae subsp. pneumoniae (strain ATCC 700721 / MGH 78578)).